Here is a 134-residue protein sequence, read N- to C-terminus: Two-component response regulator ORR5 (134 aa).

A Response regulatory domain is found at 16-133 (HVLAVDDSSV…DVSRLCSRVL (118 aa)). Aspartate 66 bears the 4-aspartylphosphate mark.

Belongs to the ARR family. Type-A subfamily. Two-component system major event consists of a His-to-Asp phosphorelay between a sensor histidine kinase (HK) and a response regulator (RR). In plants, the His-to-Asp phosphorelay involves an additional intermediate named Histidine-containing phosphotransfer protein (HPt). This multistep phosphorelay consists of a His-Asp-His-Asp sequential transfer of a phosphate group between first a His and an Asp of the HK protein, followed by the transfer to a conserved His of the HPt protein and finally the transfer to an Asp in the receiver domain of the RR protein. As to expression, expressed in mature leaves and shoots, and at low levels in roots and flowers.

Its function is as follows. Functions as a response regulator involved in His-to-Asp phosphorelay signal transduction system. Phosphorylation of the Asp residue in the receiver domain activates the ability of the protein to promote the transcription of target genes. Type-A response regulators seem to act as negative regulators of the cytokinin signaling. This is Two-component response regulator ORR5 from Oryza sativa subsp. indica (Rice).